Consider the following 95-residue polypeptide: Small ribosomal subunit protein bS6 (95 aa).

It belongs to the bacterial ribosomal protein bS6 family.

Its function is as follows. Binds together with bS18 to 16S ribosomal RNA. This is Small ribosomal subunit protein bS6 from Oceanobacillus iheyensis (strain DSM 14371 / CIP 107618 / JCM 11309 / KCTC 3954 / HTE831).